The chain runs to 263 residues: Acyl-[acyl-carrier-protein]--UDP-N-acetylglucosamine O-acyltransferase (263 aa).

It belongs to the transferase hexapeptide repeat family. LpxA subfamily. Homotrimer.

It is found in the cytoplasm. The enzyme catalyses a (3R)-hydroxyacyl-[ACP] + UDP-N-acetyl-alpha-D-glucosamine = a UDP-3-O-[(3R)-3-hydroxyacyl]-N-acetyl-alpha-D-glucosamine + holo-[ACP]. It participates in glycolipid biosynthesis; lipid IV(A) biosynthesis; lipid IV(A) from (3R)-3-hydroxytetradecanoyl-[acyl-carrier-protein] and UDP-N-acetyl-alpha-D-glucosamine: step 1/6. Functionally, involved in the biosynthesis of lipid A, a phosphorylated glycolipid that anchors the lipopolysaccharide to the outer membrane of the cell. The chain is Acyl-[acyl-carrier-protein]--UDP-N-acetylglucosamine O-acyltransferase from Campylobacter jejuni subsp. jejuni serotype O:23/36 (strain 81-176).